The primary structure comprises 149 residues: MMLRTWISLPMVLLDAYCFCIFVSCSISTTTAPVEWKSPDRQIPMNITCANYSGTVNGNVTFRGLQNKTEDFLHWLLGWGHKSICSFFPKLQGNKEQHYMYGITNLTYNCTYDRLTLLNLTTENSGKYYFKREDVNSTFYYSCYNLTVT.

The N-terminal stretch at 1-18 is a signal peptide; sequence MMLRTWISLPMVLLDAYC. N-linked (GlcNAc...) asparagine; by host glycans are attached at residues Asn-46, Asn-51, Asn-59, Asn-67, Asn-105, Asn-109, Asn-119, Asn-136, and Asn-145.

The protein belongs to the RL11 family. In terms of processing, N-glycosylated and possibly O-glycosylated.

The protein localises to the virion membrane. This Human cytomegalovirus (strain Merlin) (HHV-5) protein is Envelope glycoprotein UL4 (UL4).